The chain runs to 369 residues: Prenyltransferase malB (369 aa).

A substrate-binding site is contributed by Glu87. Dimethylallyl diphosphate contacts are provided by Arg100 and Tyr189. Tyr191 contacts substrate.

The protein belongs to the tryptophan dimethylallyltransferase family.

Prenyltransferase; part of the gene cluster that mediates the biosynthesis of malbrancheamide, a dichlorinated fungal indole alkaloid that belongs to a family of natural products containing a characteristic bicyclo[2.2.2]diazaoctane core. The first step of malbrancheamide biosynthesis involves coupling of L-proline and L-tryptophan by malG, a bimodular NRPS, to produce L-Pro-L-Trp aldehyde through reductive offloading. This compound undergoes spontaneous cyclization and dehydration to give a dienamine which is reverse prenylated at C-2 by malE. The other prenyltransferase present in the cluster, malB, displays modest activity, suggesting that may be a redundant gene in the pathway. Subsequently, a [4+2] Diels-Alder cyclo-addition catalyzed by the bifunctional enzyme malC forms the characteristic bicyclo[2.2.2]diazaoctane ring of premalbrancheamid. Finally, the flavin-dependent halogenase malA catalyzes the iterative dichlorination of the indole ring of premalbrancheamide to yield C-9 monochlorinated malbrancheamide B, C-8 monochlorinated isomalbrancheamide B, and dichlorinated malbrancheamide. MalA is also able to brominate premalbrancheamide at C-9 to yield malbrancheamide C, and, to a lesser extend, at C-8 to yield isomalbrancheamide C. Finally, malA can brominate C-9 monochlorinated malbrancheamide B at C-8 to yield malbrancheamide D, or C-8 monochlorinated isomalbrancheamide B at C-9 to produce isomalbrancheamide D. This chain is Prenyltransferase malB, found in Malbranchea aurantiaca.